The sequence spans 103 residues: MQNQKIRIRLKAFDYRLIDQSALEIVDTAKRTGAVVRGPVPLPTRIERFDLLRSPHVNKASRDQFEIRTHQRLMDIIDPTDKTVDALMKLDLPAGVDVEIKLQ.

The protein belongs to the universal ribosomal protein uS10 family. In terms of assembly, part of the 30S ribosomal subunit.

Involved in the binding of tRNA to the ribosomes. The sequence is that of Small ribosomal subunit protein uS10 from Aromatoleum aromaticum (strain DSM 19018 / LMG 30748 / EbN1) (Azoarcus sp. (strain EbN1)).